A 403-amino-acid polypeptide reads, in one-letter code: Phosphopentomutase (403 aa).

The Mn(2+) site is built by Asp-13, Asp-298, His-303, Asp-339, His-340, and His-351.

The protein belongs to the phosphopentomutase family. Mn(2+) serves as cofactor.

The protein localises to the cytoplasm. The catalysed reaction is 2-deoxy-alpha-D-ribose 1-phosphate = 2-deoxy-D-ribose 5-phosphate. It carries out the reaction alpha-D-ribose 1-phosphate = D-ribose 5-phosphate. Its pathway is carbohydrate degradation; 2-deoxy-D-ribose 1-phosphate degradation; D-glyceraldehyde 3-phosphate and acetaldehyde from 2-deoxy-alpha-D-ribose 1-phosphate: step 1/2. In terms of biological role, isomerase that catalyzes the conversion of deoxy-ribose 1-phosphate (dRib-1-P) and ribose 1-phosphate (Rib-1-P) to deoxy-ribose 5-phosphate (dRib-5-P) and ribose 5-phosphate (Rib-5-P), respectively. The sequence is that of Phosphopentomutase from Streptococcus equi subsp. zooepidemicus (strain MGCS10565).